Here is a 227-residue protein sequence, read N- to C-terminus: UPF0758 protein lpl2409 (227 aa).

Residues 102-225 (RLSNTQQTYA…YSIFAENKWA (124 aa)) form the MPN domain. His173, His175, and Asp186 together coordinate Zn(2+). The JAMM motif signature appears at 173–186 (HNHPSGLSDASQQD).

It belongs to the UPF0758 family.

The chain is UPF0758 protein lpl2409 from Legionella pneumophila (strain Lens).